The primary structure comprises 5061 residues: E3 ubiquitin-protein ligase rnf213-beta (5061 aa).

Over residues 1–12 the composition is skewed to basic residues; the sequence is MTRKRKSGKKGK. Positions 1–334 are disordered; sequence MTRKRKSGKK…QRKPSPVRAP (334 aa). Composition is skewed to polar residues over residues 24–52 and 75–87; these read GGSTSSSTTQKEGAQKGDGSSSSSTTQKD and SDGSTSSSTTNKE. The segment covering 100 to 110 has biased composition (basic residues); that stretch reads LQKKGPQKRKG. Composition is skewed to polar residues over residues 127–163 and 172–200; these read QTSYPSQARSRSHGQHNISTTESGPLSKEAQTQTSAS and TETVGQASQQTQTEINGNTETAEVSQPPQ. Composition is skewed to basic and acidic residues over residues 217-229 and 236-289; these read KGSESDGEKEESV and LSEI…EEPK. The segment covering 292 to 301 has biased composition (low complexity); that stretch reads AAAAATGKTG. Residues 306 to 322 are compositionally biased toward polar residues; that stretch reads EQTNQIEANQDSTMESK. ATP is bound by residues 1923 to 1928, E2023, D2074, K2417, and S2492; that span reads AVGKSL. Positions 3957, 3960, 3972, 3974, 3977, 3980, 3993, 3996, 4451, and 4455 each coordinate Zn(2+). The RING-type zinc-finger motif lies at 3957–3997; it reads CRVCLMELSEPFALPCEHVFCRSCLRRSMEREEAQHCPVCR. An RZ-type zinc finger spans residues 4429–4501; the sequence is MPDDHTSEAK…AYGDYDRTRP (73 aa). Residue C4462 is the Nucleophile; for E3 ubiquitin-lipopolysaccharide ligase activity of the active site. 2 residues coordinate Zn(2+): C4471 and C4474.

It belongs to the AAA ATPase family.

The protein localises to the cytoplasm. The protein resides in the cytosol. It localises to the lipid droplet. The catalysed reaction is S-ubiquitinyl-[E2 ubiquitin-conjugating enzyme]-L-cysteine + [acceptor protein]-L-lysine = [E2 ubiquitin-conjugating enzyme]-L-cysteine + N(6)-ubiquitinyl-[acceptor protein]-L-lysine.. It catalyses the reaction ATP + H2O = ADP + phosphate + H(+). The protein operates within protein modification; protein ubiquitination. Its function is as follows. Atypical E3 ubiquitin ligase that can catalyze ubiquitination of both proteins and lipids, and which is involved in various processes, such as lipid metabolism, angiogenesis and cell-autonomous immunity. Acts as a key immune sensor by catalyzing ubiquitination of the lipid A moiety of bacterial lipopolysaccharide (LPS) via its RZ-type zinc-finger: restricts the proliferation of cytosolic bacteria, such as Salmonella, by generating the bacterial ubiquitin coat through the ubiquitination of LPS. Ubiquitination of LPS triggers cell-autonomous immunity, such as antibacterial autophagy, leading to degradation of the microbial invader. Involved in lipid metabolism by regulating fat storage and lipid droplet formation; act by inhibiting the lipolytic process. Also regulates lipotoxicity by inhibiting desaturation of fatty acids. Also acts as an E3 ubiquitin-protein ligase via its RING-type zinc finger. Involved in the non-canonical Wnt signaling pathway in vascular development: acts by mediating ubiquitination and degradation of proteins downstream of rspo3, leading to inhibit the non-canonical Wnt signaling pathway and promoting vessel regression. Also has ATPase activity; ATPase activity is required for ubiquitination of LPS. This chain is E3 ubiquitin-protein ligase rnf213-beta (rnf213b), found in Danio rerio (Zebrafish).